Here is a 1854-residue protein sequence, read N- to C-terminus: Immunoglobulin A1 protease (1854 aa).

A signal peptide spans Met-1–Val-37. Residues Asp-38 to Thr-99 constitute a propeptide that is removed on maturation. The LPXTG sorting signal motif lies at Leu-96–Gly-100. Pentaglycyl murein peptidoglycan amidated threonine is present on Thr-99. The next 2 membrane-spanning stretches (helical) occupy residues Thr-106–Ser-125 and Lys-132–Leu-154. Residues Glu-155–Lys-1854 lie on the Extracellular side of the membrane. One can recognise a G5 domain in the interval Lys-256 to Lys-335. Tandem repeats lie at residues Val-349–Ile-368, Val-369–Ile-388, Val-389–Ile-406, Val-407–Val-426, Val-427–Ile-446, Val-447–Ile-466, Val-467–Ile-486, Val-487–Ile-506, Val-507–Ile-526, and Val-527–Ala-546. The 10 X 20 AA approximate tandem repeats stretch occupies residues Val-349–Ala-546. The segment covering Glu-533 to Glu-550 has biased composition (low complexity). The segment at Glu-533–Ile-570 is disordered. Positions Pro-552–Ile-570 are enriched in basic and acidic residues. His-1494 serves as a coordination point for Zn(2+). Residue Glu-1495 is part of the active site. Zn(2+)-binding residues include His-1498 and Glu-1518.

It belongs to the peptidase M26 family. It depends on Zn(2+) as a cofactor. In terms of processing, the Gram-positive cell-wall anchor motif LPXTG is located in the N-terminal part, in contrast to such motifs in other known streptococcal and staphylococcal proteins. The protease could be cleaved by the sortase and anchored in the membrane via the two potential N-terminal transmembrane domains, whereas the propeptide located prior to the LPXTG motif would remain attached to the cell wall peptidoglycan by an amide bond.

It localises to the secreted. It is found in the cell wall. Its subcellular location is the membrane. The enzyme catalyses Cleavage of Pro-|-Thr bond in the hinge region of the heavy chain of human IgA.. With respect to regulation, inhibited by EDTA. In terms of biological role, zinc metalloproteinase which cleaves human immunoglobulin A1 (IgA1) in the hinge region. The polypeptide is Immunoglobulin A1 protease (iga) (Streptococcus sanguinis).